The sequence spans 382 residues: MTRAGLSPLAWLDEVADQRRAAGLRRALRTRPAGGTAVDLASNDYLGLSTHPRVVEGAVRAVREWGAGSTGSRLVTGNTELHEGFEQALAAFTGAESALVFSSGYTANLGAVVALSGPGSLLVSDALTHASLVDACRLSRARVVVTPHRDVTAIETALATRDEQRAVVVTDSVFSADGVLAPLRDIHDVCRRHGALLIVDEAHGLGVRGTGGRGLLDEVGLAGAPDVVMTTTLSKALGSQGGVVLGPLAVRDHLIDAARPFIFDTGLAPAAVGAAWAALEVLVDEPSRARAVLDNAAALAQACDVPARPDSAVVSVILGEPEVALAAATACLEQGLRVGCFRPPTVPAGTSRLRLTARASLTDDDLDTARRVLADVLTAARR.

Arg26 serves as a coordination point for substrate. A pyridoxal 5'-phosphate-binding site is contributed by 104-105 (GY). Residue His129 coordinates substrate. Residues Ser175, 200-203 (DEAH), and 232-235 (TLSK) contribute to the pyridoxal 5'-phosphate site. Lys235 carries the N6-(pyridoxal phosphate)lysine modification. Substrate is bound at residue Thr345.

Belongs to the class-II pyridoxal-phosphate-dependent aminotransferase family. BioF subfamily. In terms of assembly, homodimer. Pyridoxal 5'-phosphate is required as a cofactor.

It carries out the reaction 6-carboxyhexanoyl-[ACP] + L-alanine + H(+) = (8S)-8-amino-7-oxononanoate + holo-[ACP] + CO2. It functions in the pathway cofactor biosynthesis; biotin biosynthesis. In terms of biological role, catalyzes the decarboxylative condensation of pimeloyl-[acyl-carrier protein] and L-alanine to produce 8-amino-7-oxononanoate (AON), [acyl-carrier protein], and carbon dioxide. The sequence is that of 8-amino-7-oxononanoate synthase from Mycobacterium sp. (strain JLS).